The sequence spans 430 residues: Pyrokinin-1 receptor (430 aa).

The Extracellular segment spans residues 1 to 16; it reads MSAGNMSHDLGPPRDP. The N-linked (GlcNAc...) asparagine glycan is linked to asparagine 5. A helical transmembrane segment spans residues 17-37; it reads LAIVIPVTVVYSLIFITGVVG. The Cytoplasmic segment spans residues 38 to 53; sequence NISTCIVIKKNRSMHT. The chain crosses the membrane as a helical span at residues 54–74; that stretch reads ATNYYLFSLAISDFLLLLSGV. Residues 75-96 are Extracellular-facing; sequence PQEVSYIWSKYPYVFGEYICIG. A disulfide bridge links cysteine 94 with cysteine 171. The chain crosses the membrane as a helical span at residues 97–117; it reads RGLLAETSANATVLTITAFTV. The Cytoplasmic segment spans residues 118-140; that stretch reads ERYIAICHPFLGQAMSKLSRAIR. The chain crosses the membrane as a helical span at residues 141–161; the sequence is IIVLVWIMAIVTAIPQAAQFG. The Extracellular portion of the chain corresponds to 162–185; the sequence is IEHYSGVEQCGIVRVIVKHSFQLS. A helical membrane pass occupies residues 186–206; that stretch reads TFIFFLAPMSIILVLYLLIGV. Residues 207-281 are Cytoplasmic-facing; that stretch reads HLYRSTLVEG…GRLNHYGTRR (75 aa). A helical membrane pass occupies residues 282–302; it reads VLRMLVAVVVCFFLCWAPFHA. Residues 303-321 lie on the Extracellular side of the membrane; the sequence is QRLIAIYAPARGAKLRDQH. The helical transmembrane segment at 322–342 threads the bilayer; it reads EFVYTVMTYVSGVLYYLSTCI. Topologically, residues 343–430 are cytoplasmic; it reads NPLLYNIMSH…QYAMIGVQVN (88 aa). The segment covering 388–397 has biased composition (polar residues); sequence TNSSQTQRFS. The segment at 388–413 is disordered; the sequence is TNSSQTQRFSIESAEQPKPSIMQNPT.

This sequence belongs to the G-protein coupled receptor 1 family.

The protein localises to the cell membrane. Receptor for the neuropeptide CAP-3/pyrokinin-1 (TGPSASSGLWFGPRL-amide). Also activated weakly by other neuropeptides terminating in the sequence PRL-amide including pyrokinin-2, Hug-gamma, and ecdysis-triggering-hormone-1. The activity of this receptor is mediated by G proteins which activate a phosphatidyl-inositol-calcium second messenger system. The protein is Pyrokinin-1 receptor of Drosophila melanogaster (Fruit fly).